The primary structure comprises 441 residues: ATP-dependent RNA helicase RhlB (441 aa).

The Q motif motif lies at 9–37; the sequence is QKFADFSLNKEIKTALNESGFEFCTPIQA. The 180-residue stretch at 40-219 folds into the Helicase ATP-binding domain; sequence LPILLQKKDI…YDHMNEPEKV (180 aa). 53–60 contributes to the ATP binding site; sequence AQTGTGKT. The DEAD box signature appears at 165 to 168; sequence DEAD. A Helicase C-terminal domain is found at 243–390; that stretch reads KMRLLLSLIE…VTNYDSEGLL (148 aa). The segment at 401 to 441 is disordered; that stretch reads RKHNNRPQQGRNNSGRPQGRNGNRAGGRNGPRRHDQVRRHS.

It belongs to the DEAD box helicase family. RhlB subfamily. In terms of assembly, component of the RNA degradosome, which is a multiprotein complex involved in RNA processing and mRNA degradation.

Its subcellular location is the cytoplasm. It carries out the reaction ATP + H2O = ADP + phosphate + H(+). In terms of biological role, DEAD-box RNA helicase involved in RNA degradation. Has RNA-dependent ATPase activity and unwinds double-stranded RNA. In Shewanella woodyi (strain ATCC 51908 / MS32), this protein is ATP-dependent RNA helicase RhlB.